The chain runs to 570 residues: Zinc finger and BTB domain-containing protein 44 (570 aa).

Lys-4 is covalently cross-linked (Glycyl lysine isopeptide (Lys-Gly) (interchain with G-Cter in SUMO2)). The BTB domain occupies 31-98; that stretch reads CDITIRVQDK…AYTATLSINT (68 aa). 6 positions are modified to phosphoserine: Ser-135, Ser-159, Ser-161, Ser-165, Ser-191, and Ser-194. Disordered stretches follow at residues 194-220 and 243-267; these read SPVKCGTQTSSPQVLNSSASYSENRNQ and EKVKQAENTRTLELPGPSETGRRMA. The segment covering 199–220 has biased composition (polar residues); that stretch reads GTQTSSPQVLNSSASYSENRNQ. Residue Thr-200 is modified to Phosphothreonine. A Glycyl lysine isopeptide (Lys-Gly) (interchain with G-Cter in SUMO2) cross-link involves residue Lys-290. Residues 295 to 369 are disordered; it reads SDEEVHEEVS…NAPPDDDDRL (75 aa). Positions 304–318 are enriched in low complexity; it reads SQPVSASQSSLSDQQ. Over residues 352–361 the composition is skewed to polar residues; the sequence is TLQSTSSTNA. 4 consecutive C2H2-type zinc fingers follow at residues 399–421, 427–449, 455–479, and 487–511; these read FQCPTCGVRFTRIQNLKQHMLIH, FQCDRCGKKFTRAYSLKMHRLKH, FRCQICSATFTSFGEYKHHMRVSRH, and YECKTCGAMFTNSGNLIVHLRSLNH.

It is found in the nucleus. Its function is as follows. May be involved in transcriptional regulation. The sequence is that of Zinc finger and BTB domain-containing protein 44 (ZBTB44) from Homo sapiens (Human).